Reading from the N-terminus, the 447-residue chain is ATP-dependent protease ATPase subunit HslU (447 aa).

ATP is bound by residues I17, 59-64, D256, E321, and R393; that span reads GVGKTE.

Belongs to the ClpX chaperone family. HslU subfamily. In terms of assembly, a double ring-shaped homohexamer of HslV is capped on each side by a ring-shaped HslU homohexamer. The assembly of the HslU/HslV complex is dependent on binding of ATP.

It localises to the cytoplasm. ATPase subunit of a proteasome-like degradation complex; this subunit has chaperone activity. The binding of ATP and its subsequent hydrolysis by HslU are essential for unfolding of protein substrates subsequently hydrolyzed by HslV. HslU recognizes the N-terminal part of its protein substrates and unfolds these before they are guided to HslV for hydrolysis. The protein is ATP-dependent protease ATPase subunit HslU of Pseudomonas putida (strain ATCC 47054 / DSM 6125 / CFBP 8728 / NCIMB 11950 / KT2440).